We begin with the raw amino-acid sequence, 741 residues long: Zinc finger and BTB domain-containing protein 20 (741 aa).

A compositionally biased stretch (basic and acidic residues) spans 1-17 (MLERKKPKTAENQKASE). The disordered stretch occupies residues 1–28 (MLERKKPKTAENQKASEENEITQPGGSS). The 64-residue stretch at 104 to 167 (CDVTVRIHGS…MYSGVLRVSQ (64 aa)) folds into the BTB domain. The disordered stretch occupies residues 203 to 235 (GIQDSGQDTPRGTPESGTSGQSSDTESGYLQSH). The span at 206 to 235 (DSGQDTPRGTPESGTSGQSSDTESGYLQSH) shows a compositional bias: polar residues. Position 211 is a phosphothreonine (threonine 211). Residue lysine 330 forms a Glycyl lysine isopeptide (Lys-Gly) (interchain with G-Cter in SUMO1); alternate linkage. A Glycyl lysine isopeptide (Lys-Gly) (interchain with G-Cter in SUMO2); alternate cross-link involves residue lysine 330. Residues 350-440 (RNESEECTED…SSPERSNESE (91 aa)) are disordered. The residue at position 353 (serine 353) is a Phosphoserine. The span at 354-367 (EECTEDTDQAEGTE) shows a compositional bias: acidic residues. A Phosphothreonine modification is found at threonine 357. Residue lysine 371 forms a Glycyl lysine isopeptide (Lys-Gly) (interchain with G-Cter in SUMO2) linkage. Over residues 404–423 (AEPAQPEQAAEAPAESSAQP) the composition is skewed to low complexity. 4 consecutive C2H2-type zinc fingers follow at residues 578-600 (YECTLCNKTFTAKQNYVKHMFVH), 606-628 (HQCSICWRSFSLKDYLIKHMVTH), 634-656 (YQCSICNKRFTQKSSLNVHMRLH), and 662-684 (YECYICKKKFSHKTLLERHVALH). Threonine 690 and threonine 695 each carry phosphothreonine. The C2H2-type 5 zinc-finger motif lies at 715–737 (YVCSVCPAKFDQIEQFNDHMRMH). Residue lysine 723 forms a Glycyl lysine isopeptide (Lys-Gly) (interchain with G-Cter in SUMO2) linkage.

In terms of assembly, can homodimerize. Binds to DNA. In terms of processing, sumoylated with SUMO1. In terms of tissue distribution, specifically expressed in early hippocampal neurons, cerebellar granule cells and gliogenic progenitors as well as in differentiated glia. Expressed in adult and aged myogenic satellite cells.

Its subcellular location is the nucleus. May be a transcription factor that may be involved in hematopoiesis, oncogenesis, and immune responses. Plays a role in postnatal myogenesis, may be involved in the regulation of satellite cells self-renewal. In Mus musculus (Mouse), this protein is Zinc finger and BTB domain-containing protein 20 (Zbtb20).